The primary structure comprises 446 residues: GTPase Der (446 aa).

2 consecutive EngA-type G domains span residues 3-167 and 180-353; these read PVLA…AFDE and IRLA…ASAT. Residues 9–16, 56–60, 119–122, 186–193, 233–237, and 298–301 contribute to the GTP site; these read GRPNVGKS, DTGGF, NKAE, DTAGL, and NKWD. Residues 354–438 enclose the KH-like domain; that stretch reads KKLATPVLTR…PMRIEMKSSR (85 aa).

This sequence belongs to the TRAFAC class TrmE-Era-EngA-EngB-Septin-like GTPase superfamily. EngA (Der) GTPase family. In terms of assembly, associates with the 50S ribosomal subunit.

In terms of biological role, GTPase that plays an essential role in the late steps of ribosome biogenesis. The protein is GTPase Der of Methylibium petroleiphilum (strain ATCC BAA-1232 / LMG 22953 / PM1).